The sequence spans 611 residues: MALTNFSLPFGALGQPWGVTIAPLHPIHQLASNTNNLLYSPADHQQQTPAEAAADPEYFKNNPYAPPQSGGYQYQNTAGRRKQSNAYLPPTAPNAVRNSVYHIQQVQQTQQQQTQQQHQQQDQHENSVSFQSSSSRSSSSSTTGQSSIQLTQTHASGRGPAEGSYSRYPGQQAQPPQQQQPQQKQYFNAHGSASATFTKNSGSFSITSFGSRQQQQQPPQPQQPPPSQQQQPPPAPPPQRSRQAKPEAQPAQTYGVAPPENYPERAPGFTRVQAGQGSRTQVHAVLDYDVEEGEEDEEEDGEEEGQFYEGQENDKSNNNQMPTVTPIQGPIYLKNGTVPVVPLFSYPKLNNGSFLQIPIWWTALSVALGLDVRGDVIKGVPCIKRYHQLFCPTAGNSYPIDKIERFIDDNKALMRRMYGDFEMNMEGPGGGGGRQQGKVRKRRFIDEPDIFIPPGAFAANAGETVEAGDSYFGQLRKKRQAAAGGSRNRGGSAGGSGNGNTNANRQPGNKNGSSGTGRLDACESKIEIVTPYWASNSAGKIRAIVNTQHFEQAIHQEVCSNTQTPRCEGECGCEQKYKWHRLLAYDPDNDCKGIFMDWFLFPSCCVCRCNP.

An N-terminal signal peptide occupies residues 1 to 14 (MALTNFSLPFGALG). An N-linked (GlcNAc...) asparagine glycan is attached at Asn5. Residues 57–322 (EYFKNNPYAP…NDKSNNNQMP (266 aa)) form a disordered region. Low complexity-rich tracts occupy residues 104–120 (QQVQQTQQQQTQQQHQQ), 127–153 (SVSFQSSSSRSSSSSTTGQSSIQLTQT), and 169–185 (PGQQAQPPQQQQPQQKQ). Polar residues predominate over residues 191–210 (GSASATFTKNSGSFSITSFG). Residues 218–239 (PPQPQQPPPSQQQQPPPAPPPQ) show a composition bias toward pro residues. Over residues 288–306 (YDVEEGEEDEEEDGEEEGQ) the composition is skewed to acidic residues. N-linked (GlcNAc...) asparagine glycans are attached at residues Asn335 and Asn351. A disordered region spans residues 477–518 (KKRQAAAGGSRNRGGSAGGSGNGNTNANRQPGNKNGSSGTGR). Residues 487 to 498 (RNRGGSAGGSGN) are compositionally biased toward gly residues. The N-linked (GlcNAc...) asparagine glycan is linked to Asn511. A Spaetzle domain is found at 521 to 609 (ACESKIEIVT…LFPSCCVCRC (89 aa)). Cystine bridges form between Cys522–Cys573, Cys559–Cys605, and Cys567–Cys607.

As to quaternary structure, homodimer; disulfide-linked.

Functionally, neurotrophin which may function as a ligand to the Toll-related receptor Tollo. Involved in a Tollo and JNK signaling pathway that positively regulates neuromuscular junction (NMJ) growth in presynaptic motorneurons. May function by activating Tollo to promote the phosphorylation of JNK. The chain is Protein spaetzle 3 from Drosophila melanogaster (Fruit fly).